Reading from the N-terminus, the 484-residue chain is Serine hydroxymethyltransferase, cytosolic (484 aa).

Alanine 2 carries the post-translational modification N-acetylalanine. Residue asparagine 6 is modified to Deamidated asparagine; alternate. The isoaspartyl glycine isopeptide (Asn-Gly); alternate cross-link spans 6 to 7; that stretch reads NG. The active-site Nucleophile is cysteine 204. Catalysis depends on histidine 256, which acts as the Proton donor. The residue at position 257 (lysine 257) is an N6-(pyridoxal phosphate)lysine.

This sequence belongs to the SHMT family. As to quaternary structure, homotetramer. Identified in complex with ABRAXAS2 and the other subunits of the BRISC complex, at least composed of ABRAXAS2, BRCC3/BRCC36, BABAM2 and BABAM1/NBA1. Pyridoxal 5'-phosphate serves as cofactor. In terms of processing, deamidation of asparagine produces alternatively aspartate or isoaspartate, which in turn can be converted to aspartate through carboxylmethylation/demethylation.

It localises to the cytoplasm. The enzyme catalyses (6R)-5,10-methylene-5,6,7,8-tetrahydrofolate + glycine + H2O = (6S)-5,6,7,8-tetrahydrofolate + L-serine. Its pathway is one-carbon metabolism; tetrahydrofolate interconversion. In terms of biological role, interconversion of serine and glycine. This chain is Serine hydroxymethyltransferase, cytosolic (SHMT1), found in Oryctolagus cuniculus (Rabbit).